Consider the following 184-residue polypeptide: (2E)-enoyl-[ACP] glycyltransferase (184 aa).

This sequence belongs to the FcoT family.

The enzyme catalyses a (3R)-3-[(carboxymethyl)amino]fatty acid + holo-[ACP] + H(+) = a (2E)-enoyl-[ACP] + glycine + H2O. It carries out the reaction (3R)-3-[(carboxylmethyl)amino]decanoate + holo-[ACP] + H(+) = (2E)-decenoyl-[ACP] + glycine + H2O. Functionally, involved in the biosynthesis of a unique class of isonitrile lipopeptides (INLPs) that seem to play a role in metal acquisition in M.marinum. Catalyzes a Michael addition of glycine to the beta-position of an alpha,beta-unsaturated fatty acyl-[ACP], producing a (3R)-3-[(carboxymethyl)amino]fatty acid. Acts on the (2E)-decenoyl moiety loaded on the acyl-carrier protein MmaB, forming the product (3R)-3-[(carboxymethyl)amino]decanoate released from MmaB. This is (2E)-enoyl-[ACP] glycyltransferase from Mycobacterium marinum (strain ATCC BAA-535 / M).